The chain runs to 47 residues: Thionin (47 aa).

4 cysteine pairs are disulfide-bonded: cysteine 3-cysteine 41, cysteine 4-cysteine 33, cysteine 12-cysteine 31, and cysteine 16-cysteine 27.

This sequence belongs to the plant thionin (TC 1.C.44) family. 4 C-C subfamily.

The protein resides in the secreted. In terms of biological role, thionins are small plant proteins which are toxic to animal cells. They seem to exert their toxic effect at the level of the cell membrane. Their precise function is not known. The protein is Thionin (THI1) of Pyrularia pubera (Buffalo nut).